We begin with the raw amino-acid sequence, 238 residues long: Aspartate/glutamate leucyltransferase (238 aa).

It belongs to the R-transferase family. Bpt subfamily.

The protein resides in the cytoplasm. It carries out the reaction N-terminal L-glutamyl-[protein] + L-leucyl-tRNA(Leu) = N-terminal L-leucyl-L-glutamyl-[protein] + tRNA(Leu) + H(+). The catalysed reaction is N-terminal L-aspartyl-[protein] + L-leucyl-tRNA(Leu) = N-terminal L-leucyl-L-aspartyl-[protein] + tRNA(Leu) + H(+). Functionally, functions in the N-end rule pathway of protein degradation where it conjugates Leu from its aminoacyl-tRNA to the N-termini of proteins containing an N-terminal aspartate or glutamate. This chain is Aspartate/glutamate leucyltransferase, found in Aeromonas hydrophila subsp. hydrophila (strain ATCC 7966 / DSM 30187 / BCRC 13018 / CCUG 14551 / JCM 1027 / KCTC 2358 / NCIMB 9240 / NCTC 8049).